The chain runs to 79 residues: Acyl carrier protein (79 aa).

The Carrier domain occupies 2–77 (ADHASKIKDI…DAVAYLEAKV (76 aa)). Ser37 bears the O-(pantetheine 4'-phosphoryl)serine mark.

It belongs to the acyl carrier protein (ACP) family. 4'-phosphopantetheine is transferred from CoA to a specific serine of apo-ACP by AcpS. This modification is essential for activity because fatty acids are bound in thioester linkage to the sulfhydryl of the prosthetic group.

Its subcellular location is the cytoplasm. It participates in lipid metabolism; fatty acid biosynthesis. Its function is as follows. Carrier of the growing fatty acid chain in fatty acid biosynthesis. The chain is Acyl carrier protein from Gemmatimonas aurantiaca (strain DSM 14586 / JCM 11422 / NBRC 100505 / T-27).